Here is a 1035-residue protein sequence, read N- to C-terminus: MSGSYPFIDIAALDSVREGFARGDAQLVLAHDLSTVLWVNGPGAKLFGYNRVEDLIEGQLDLPVATRRQIAAFSSENTSAPSAVAVRLGGGLRSELTHLHVSNIKLPDGVAALLVATQMPDNSAEAAISGLGDDSTHIALVDAVGKVVAASPRFALLDISASTLEDLIVEAGDATDRIVKRRIRTGSHSVPGAIARLTDTPALHLLCIVGDAPAQFQTAAEAVPLPDNAEAVLEEILPEQGDAPAQQAQKTHAEQPRPKTFAFDHDAPPARFIWKVGPDGTFSEISPNLAAVVGPNSADIVGRRFSDVANVFGFDTDGSIAALLLERDTWSGKRLLWPVEGTRLRVPVELAALPVYSRDREFLGFRGFGIVRPAEAEADPEEIGLALAGGIPQNRKPRKEPAETARMVGEDDVLALSEEVANDDQPAAVLPKPPLDITPTPGRRDSDKVISLLNSCAQEKVAADQAKFLKEKERATRPEGGLTKTERNAFREIAERLRKQGLANTRAESETPVSETSSIEPVEPTPPVKTRSEPIQPDETALLANLPVPVIIHSGDAIHYVNQALLDITGYESLDDIRSAGGVDVLFNSESDDGETRQSMLLRHADGSEEPVDAHLNAIAWRGGRALMLSLMPVTAADLPAPAELPAANDEEKQALEAHVEELKTILDTATDGVVLIDPEGRIRSMNHSASALFGYERDEAEGKFFSMLFAIESQRAAMDYLHGLSGNGVLSVLNDGREVIGREAKGGFIPLFMTIGKLPHTRGFCAVLRDITQWKRTEEELTNARKEAERASNQKTEFLARISHEIRTPLNAIIGFSELMADEKFGPIGNDRYRDYLRDINRSGNHVLALVNDLLDISKIEAGALDMQFEAVSLNDAIGEAIALMQPQANRERVIIRSSFQSNLPDIVADSRSIKQVALNLLSNAVRFTAPGGQVIVSTSYELNGDVVMRVRDTGIGMSKSEVEQALKPFRQINALERRKAESAKDWRNEGTGLGLPLTKAMVEANRAQFAIDSNPGQGTVVEIVFPPTRVLAD.

An important for polar localization region spans residues 1–613 (MSGSYPFIDI…HADGSEEPVD (613 aa)). The segment at 500–533 (QGLANTRAESETPVSETSSIEPVEPTPPVKTRSE) is disordered. The interval 614–1035 (AHLNAIAWRG…VFPPTRVLAD (422 aa)) is interaction with DivK. A PAS domain is found at 659–730 (HVEELKTILD…YLHGLSGNGV (72 aa)). Residues 802–1031 (RISHEIRTPL…VVEIVFPPTR (230 aa)) enclose the Histidine kinase domain. His805 carries the post-translational modification Phosphohistidine; by autocatalysis.

In terms of assembly, interacts with DivK.

Its subcellular location is the cytoplasm. The catalysed reaction is ATP + protein L-histidine = ADP + protein N-phospho-L-histidine.. Its function is as follows. Functions as a polar differentiation marker. Essential protein that, by localizing in the old pole of dividing cells, controls cell division and maturation, probably through control of DivK phosphorylation status and cellular distribution, which in turn regulates CtrA, a transcriptional regulator of the minB operon. The asymmetrical localization of this protein is probably required for cells to enter a new division cycle. The sequence is that of Cell-division control histidine kinase PdhS (pdhS) from Brucella abortus (strain S19).